Here is a 455-residue protein sequence, read N- to C-terminus: Chitin deacetylase 2 (455 aa).

The first 19 residues, 1 to 19 (MIPSTAAALLTLTAGAAFA), serve as a signal peptide directing secretion. Residues Asn-86, Asn-98, Asn-122, and Asn-142 are each glycosylated (N-linked (GlcNAc...) asparagine). One can recognise a NodB homology domain in the interval 157-347 (MTWGLGFDDG…IKSAFNYIVP (191 aa)). Residue Asp-164 is the Proton acceptor of the active site. Asp-164 is an acetate binding site. Asp-165 contacts Co(2+). N-linked (GlcNAc...) asparagine glycosylation is present at Asn-168. Co(2+)-binding residues include His-214 and His-218. Tyr-255 contacts acetate. 2 N-linked (GlcNAc...) asparagine glycosylation sites follow: Asn-270 and Asn-308. Catalysis depends on His-321, which acts as the Proton donor. Asn-325, Asn-353, Asn-362, and Asn-377 each carry an N-linked (GlcNAc...) asparagine glycan. The tract at residues 381–423 (STTQKDGSSSTNTASGSGAAGSASATSSSDDSSSSGGSSGSSG) is disordered. The N-linked (GlcNAc...) asparagine glycan is linked to Asn-426. The GPI-anchor amidated serine moiety is linked to residue Ser-429. The propeptide at 430-455 (GALGMFDSLSGVGLILGGVVAGVMLL) is removed in mature form.

The protein belongs to the polysaccharide deacetylase family. It depends on Co(2+) as a cofactor. The GPI anchor is required for the attachment to the cell membrane but not for cell surface targeting.

The protein resides in the secreted. Its subcellular location is the cell wall. The protein localises to the cell membrane. The catalysed reaction is [(1-&gt;4)-N-acetyl-beta-D-glucosaminyl](n) + n H2O = chitosan + n acetate. Hydrolyzes the N-acetamido groups of N-acetyl-D-glucosamine residues in chitin to form chitosan and acetate. Chitosan is required to anchor melanin to the cell wall, for maintenance of cell wall integrity, and for proper cytokinesis. Chitosan offers an advantage during infection as it is less readily detected than chitin by host immunosurveillance mechanisms. The chain is Chitin deacetylase 2 from Cryptococcus neoformans var. grubii serotype A (strain H99 / ATCC 208821 / CBS 10515 / FGSC 9487) (Filobasidiella neoformans var. grubii).